Reading from the N-terminus, the 245-residue chain is Tetrahydromethanopterin S-methyltransferase subunit A 1 (245 aa).

Over 1–222 (MADKKPAADN…AGNYSGKVQG (222 aa)) the chain is Cytoplasmic. Position 84 (H84) interacts with 5-hydroxybenzimidazolylcob(I)amide. Residues 223–243 (IMIGLIFTLVIGFLLLMAPLL) form a helical membrane-spanning segment. Residues 244 to 245 (GA) lie on the Extracellular side of the membrane.

This sequence belongs to the MtrA family. The complex is composed of 8 subunits; MtrA, MtrB, MtrC, MtrD, MtrE, MtrF, MtrG and MtrH. It depends on 5-hydroxybenzimidazolylcob(I)amide as a cofactor.

It is found in the cell membrane. It catalyses the reaction 5-methyl-5,6,7,8-tetrahydromethanopterin + coenzyme M + 2 Na(+)(in) = 5,6,7,8-tetrahydromethanopterin + methyl-coenzyme M + 2 Na(+)(out). The protein operates within one-carbon metabolism; methanogenesis from CO(2); methyl-coenzyme M from 5,10-methylene-5,6,7,8-tetrahydromethanopterin: step 2/2. Functionally, part of a complex that catalyzes the formation of methyl-coenzyme M and tetrahydromethanopterin from coenzyme M and methyl-tetrahydromethanopterin. This is an energy-conserving, sodium-ion translocating step. This chain is Tetrahydromethanopterin S-methyltransferase subunit A 1, found in Methanobrevibacter ruminantium (strain ATCC 35063 / DSM 1093 / JCM 13430 / OCM 146 / M1) (Methanobacterium ruminantium).